The chain runs to 51 residues: Large ribosomal subunit protein eL39 (51 aa).

The protein belongs to the eukaryotic ribosomal protein eL39 family. Part of the 50S ribosomal subunit.

The polypeptide is Large ribosomal subunit protein eL39 (Pyrococcus furiosus (strain ATCC 43587 / DSM 3638 / JCM 8422 / Vc1)).